The chain runs to 511 residues: MTIILKPGSVPLETLEKIYREGLPVRIDPAFHAGIEKAAARIAEIAAGDAPVYGINTGFGKLASIRIAAGDVATLQRNLILSHCCGVGEPLSENIVRLIMALKLVSLGRGASGVRLEVITLIEAMLEKGVIPMIPEKGSVGASGDLAPLAHMTAAMIGEGEAFYRGERLSGAKALGKAGLKPVVLAAKEGLALINGTQTSTALALAGLFRAHRAARTALITGALSTDAAMGSDAPFHEEIHQLRGHKGQIDAGRALRTLLEGSAIRRSHLEGDQRVQDPYCIRCQPQVDGACLDILRQAARTLEIEANAVTDNPLVLSDGRAVSGGNFHAEPVAFAADQIALAVCEIGAISQRRIALLVDPSLSFGLPAFLARKPGLNSGLMIAEVTSAALMSENKQMAHPASVDSTPTSANQEDHVSMACHGARRLLQMTANLNAIIGIEALTGALGVELRKPLTTSAELAKVIAALRAKVATLEEDRYMADDLKAAAELVADGTLSGVISAGILPDLEA.

A cross-link (5-imidazolinone (Ala-Gly)) is located at residues 142–144; the sequence is ASG. Position 143 is a 2,3-didehydroalanine (Ser) (Ser143).

Belongs to the PAL/histidase family. In terms of processing, contains an active site 4-methylidene-imidazol-5-one (MIO), which is formed autocatalytically by cyclization and dehydration of residues Ala-Ser-Gly.

It localises to the cytoplasm. It catalyses the reaction L-histidine = trans-urocanate + NH4(+). Its pathway is amino-acid degradation; L-histidine degradation into L-glutamate; N-formimidoyl-L-glutamate from L-histidine: step 1/3. The polypeptide is Histidine ammonia-lyase (Brucella abortus (strain S19)).